Reading from the N-terminus, the 516-residue chain is Thiosulfate sulfurtransferase/rhodanese-like domain-containing protein 2 (516 aa).

Serine 269 carries the phosphoserine modification. The region spanning 301–396 (EQSDTILLDC…YLEEFPDGFY (96 aa)) is the Rhodanese domain. The Cysteine persulfide intermediate role is filled by cysteine 355. The disordered stretch occupies residues 490–516 (RELLQHVRQPVSPEPGPDAEEDGPVLV). Over residues 506-516 (PDAEEDGPVLV) the composition is skewed to acidic residues.

This Pongo abelii (Sumatran orangutan) protein is Thiosulfate sulfurtransferase/rhodanese-like domain-containing protein 2 (TSTD2).